The sequence spans 248 residues: Glucosamine-6-phosphate isomerase (248 aa).

The Proton acceptor; for enolization step role is filled by aspartate 68. The For ring-opening step role is filled by glutamate 137. Catalysis depends on histidine 139, which acts as the Proton acceptor; for ring-opening step. Residue glutamate 144 is the For ring-opening step of the active site.

This sequence belongs to the glucosamine/galactosamine-6-phosphate isomerase family. Monomer.

The enzyme catalyses alpha-D-glucosamine 6-phosphate + H2O = beta-D-fructose 6-phosphate + NH4(+). The chain is Glucosamine-6-phosphate isomerase (NAG1) from Candida albicans (strain SC5314 / ATCC MYA-2876) (Yeast).